Reading from the N-terminus, the 550-residue chain is MSGPMQRSSQPQFISSVERNNQSNGPGTPLIDSIDVDQIVIPEKNSWKNLFSYIGPGFLVSIAYIDPGNFETDLQAGAQYKYELLWIILIASCAALIIQSLAARLGVVTGKHLAEHCRAEYPKATNFILWILAELAVVACDIPEVIGTAFALNMLFKIPVWCGVLITGLSTLMLLLLQQYGVRKLEFLIAILVSLIATCFLVELGYSKPNSSEVVRGLFVPELKGNGATGLAISLLGAMVMPHNLFLHSALVLSRKVPRSVHGIKEACRFYMIESAFALTIAFLINISIISVSGAVCGSDNLSPEDQMNCSDLDLNKASFLLKNVLGNWSSKLFAVALLASGQSSTITGTYAGQYVMQGFLDLRMTPWIRNLLTRSLAILPSLIVSIIGGSSAAGQLIIIASMILSFELPFALVPLLKFTSSRTKMGQHTNSKAISVITWGIGSFIVVINTYFLITSFVKLLLHNGLSTVSQVFSGIFGFLGMLIYMAAILYLVFRKNRKATLPLLEGDSTVRIVGRDTATEGEGSLGHLPREDISSMQLPQQRTASDLD.

The segment covering 1-26 (MSGPMQRSSQPQFISSVERNNQSNGP) has biased composition (polar residues). Residues 1 to 30 (MSGPMQRSSQPQFISSVERNNQSNGPGTPL) are disordered. The next 12 membrane-spanning stretches (helical) occupy residues 50–70 (LFSYIGPGFLVSIAYIDPGNF), 83–103 (ELLWIILIASCAALIIQSLAA), 127–147 (FILWILAELAVVACDIPEVIG), 158–178 (IPVWCGVLITGLSTLMLLLLQ), 185–205 (LEFLIAILVSLIATCFLVELG), 233–253 (ISLLGAMVMPHNLFLHSALVL), 276–296 (AFALTIAFLINISIISVSGAV), 333–353 (LFAVALLASGQSSTITGTYAG), 368–390 (WIRNLLTRSLAILPSLIVSIIGG), 397–417 (LIIIASMILSFELPFALVPLL), 435–455 (ISVITWGIGSFIVVINTYFLI), and 473–493 (VFSGIFGFLGMLIYMAAILYL). The tract at residues 523–550 (GEGSLGHLPREDISSMQLPQQRTASDLD) is disordered. A compositionally biased stretch (polar residues) spans 536 to 550 (SSMQLPQQRTASDLD).

This sequence belongs to the NRAMP (TC 2.A.55) family.

It localises to the membrane. In terms of biological role, probable metal transporter. The chain is Metal transporter Nramp3 (NRAMP3) from Oryza sativa subsp. japonica (Rice).